Here is a 613-residue protein sequence, read N- to C-terminus: ATP-dependent zinc metalloprotease FtsH (613 aa).

Residues 1-4 lie on the Cytoplasmic side of the membrane; the sequence is MVKN. The helical transmembrane segment at 5-25 threads the bilayer; that stretch reads LIFWLVITVVLMSVFQNFNSS. Over 26–98 the chain is Extracellular; sequence DTSNHRVDYS…VGEIPEEPSL (73 aa). Residues 99–119 form a helical membrane-spanning segment; sequence LISIFISWFPMLLLIGVWIFF. The Cytoplasmic segment spans residues 120-613; it reads MRQMQMGGGK…WLEVDQKKDI (494 aa). Residue 192–199 coordinates ATP; that stretch reads GPPGTGKT. Zn(2+) is bound at residue H414. Residue E415 is part of the active site. Zn(2+)-binding residues include H418 and D492.

In the central section; belongs to the AAA ATPase family. This sequence in the C-terminal section; belongs to the peptidase M41 family. In terms of assembly, homohexamer. Requires Zn(2+) as cofactor.

It localises to the cell membrane. Its function is as follows. Acts as a processive, ATP-dependent zinc metallopeptidase for both cytoplasmic and membrane proteins. Plays a role in the quality control of integral membrane proteins. This is ATP-dependent zinc metalloprotease FtsH from Buchnera aphidicola subsp. Schizaphis graminum (strain Sg).